Reading from the N-terminus, the 48-residue chain is uncharacterized protein (48 aa).

This is an uncharacterized protein from Acidianus convivator (ABV).